The chain runs to 288 residues: MKDRTQELRTAKDSDDDDDVAVTVDRDRFMDEFFEQVEEIRGFIDKIAENVEEVKRKHSAILASPNPDEKTKEELEELMSDIKKTANKVRSKLKSIEQSIEQEEGLNRSSADLRIRKTQHSTLSRKFVEVMSEYNATQSDYRERCKGRIQRQLEITGRTTTSEELEDMLESGNPAIFASGIIMDSSISKQALSEIETRHSEIIKLENSIRELHDMFMDMAMLVESQGEMIDRIEYNVEHAVDYVERAVSDTKKAVKYQSKARRKKIMIIICCVIPGIVIASTVGGIFA.

At Met-1 to Lys-265 the chain is on the cytoplasmic side. Residues Ser-14, Ser-64, and Ser-95 each carry the phosphoserine modification. The stretch at Asp-68–Ser-109 forms a coiled coil. Ser-188 carries the post-translational modification Phosphoserine; by DAPK1. Residues Leu-192–Ala-254 enclose the t-SNARE coiled-coil homology domain. Residues Lys-252, Lys-253, and Lys-256 each participate in a glycyl lysine isopeptide (Lys-Gly) (interchain with G-Cter in SUMO) cross-link. The helical; Anchor for type IV membrane protein transmembrane segment at Ile-266–Ile-286 threads the bilayer. At Phe-287 to Ala-288 the chain is on the extracellular side.

The protein belongs to the syntaxin family. In terms of assembly, part of the SNARE core complex containing SNAP25, VAMP2 and STX1A; this complex constitutes the basic catalytic machinery of the complex neurotransmitter release apparatus. The SNARE complex interacts with CPLX1. Interacts with STXBP1. The interaction with STXBP1 promotes assembly of the SNARE complex. Interacts (via C-terminus) with KCNB1 (via C-terminus); the interaction increases in a calcium-dependent manner and induces a pore-independent enhancement of exocytosis in neuroendocrine cells, chromaffin cells, pancreatic beta cells and from the soma of dorsal root ganglia (DRG) neurons. Interacts with SYTL4. Interacts with STXBP6. Interacts with PLCL1 (via C2 domain). Interacts with OTOF. Interacts with LGI3. Interacts (via the H3 domain) with SLC6A4 (via the N-terminus); this interaction regulates SLC4A6 channel conductance in thalamocortical neurons. Interacts with SYT6 and SYT8; the interaction is Ca(2+)-dependent. Interacts with VAMP8. Interacts with SNAP23. Interacts with VAPA and SYBU. Interacts with PRRT2. Interacts with SEPT8. Interacts with STXBP5L. Interacts with synaptotagmin-1/SYT1. Interacts with SEPTIN5; in the cerebellar cortex. Interacts with SEPTIN4; in the striatum. In terms of processing, phosphorylated by CK2. Phosphorylation at Ser-188 by DAPK1 significantly decreases its interaction with STXBP1. Sumoylated, sumoylation is required for regulation of synaptic vesicle endocytosis.

The protein resides in the cytoplasmic vesicle. It localises to the secretory vesicle. The protein localises to the synaptic vesicle membrane. Its subcellular location is the cell membrane. It is found in the synapse. The protein resides in the synaptosome. Plays an essential role in hormone and neurotransmitter calcium-dependent exocytosis and endocytosis. Part of the SNARE (Soluble NSF Attachment Receptor) complex composed of SNAP25, STX1A and VAMP2 which mediates the fusion of synaptic vesicles with the presynaptic plasma membrane. STX1A and SNAP25 are localized on the plasma membrane while VAMP2 resides in synaptic vesicles. The pairing of the three SNAREs from the N-terminal SNARE motifs to the C-terminal anchors leads to the formation of the SNARE complex, which brings membranes into close proximity and results in final fusion. Participates in the calcium-dependent regulation of acrosomal exocytosis in sperm. Also plays an important role in the exocytosis of hormones such as insulin or glucagon-like peptide 1 (GLP-1). The polypeptide is Syntaxin-1A (STX1A) (Pongo abelii (Sumatran orangutan)).